Here is a 109-residue protein sequence, read N- to C-terminus: Putative double-stranded DNA mimic protein YciU (109 aa).

This sequence belongs to the putative dsDNA mimic protein family.

Functionally, may act as a double-stranded DNA (dsDNA) mimic. Probably regulates the activity of a dsDNA-binding protein. The protein is Putative double-stranded DNA mimic protein YciU of Escherichia coli O45:K1 (strain S88 / ExPEC).